The following is a 452-amino-acid chain: Maltoporin (452 aa).

A signal peptide spans 1–25; the sequence is MMITLRKLPLAVAVAAGVMSAQAMA.

This sequence belongs to the porin LamB (TC 1.B.3) family. Homotrimer formed of three 18-stranded antiparallel beta-barrels, containing three independent channels.

Its subcellular location is the cell outer membrane. The catalysed reaction is beta-maltose(in) = beta-maltose(out). Its function is as follows. Involved in the transport of maltose and maltodextrins. This is Maltoporin from Salmonella agona (strain SL483).